Consider the following 528-residue polypeptide: Transcriptional activator protein UGA3 (528 aa).

The zn(2)-C6 fungal-type DNA-binding region spans 17-44 (CITCKIRKKRCSEDKPVCRDCRRLSFPC). Residues 55-62 (SLKKIKAD) carry the Nuclear localization signal motif.

UGA3 proteins associate in oligomers, at least in the presence of inducer.

The protein localises to the nucleus. Functionally, GABA-dependent positive regulation of genes required for catabolism of GABA (UGA4, UGA1, and UGA2). This Saccharomyces cerevisiae (strain ATCC 204508 / S288c) (Baker's yeast) protein is Transcriptional activator protein UGA3 (UGA3).